The sequence spans 721 residues: Polyribonucleotide nucleotidyltransferase (721 aa).

Mg(2+)-binding residues include Asp-495 and Asp-501. Residues Pro-562–Ile-621 form the KH domain. One can recognise an S1 motif domain in the interval Gly-631–Arg-699.

It belongs to the polyribonucleotide nucleotidyltransferase family. It depends on Mg(2+) as a cofactor.

The protein resides in the cytoplasm. The enzyme catalyses RNA(n+1) + phosphate = RNA(n) + a ribonucleoside 5'-diphosphate. Its function is as follows. Involved in mRNA degradation. Catalyzes the phosphorolysis of single-stranded polyribonucleotides processively in the 3'- to 5'-direction. The polypeptide is Polyribonucleotide nucleotidyltransferase (Prochlorococcus marinus subsp. pastoris (strain CCMP1986 / NIES-2087 / MED4)).